Consider the following 198-residue polypeptide: Putative pseudouridine methyltransferase (198 aa).

Positions 132 and 186 each coordinate S-adenosyl-L-methionine.

This sequence belongs to the methyltransferase superfamily. TrmY family.

It is found in the cytoplasm. In Vibrio vulnificus (strain CMCP6), this protein is Putative pseudouridine methyltransferase.